The chain runs to 261 residues: Cytochrome c oxidase subunit 3 (261 aa).

At Met-1–Pro-15 the chain is on the mitochondrial matrix side. A helical transmembrane segment spans residues Trp-16–Trp-34. Residues Phe-35–Met-40 are Mitochondrial intermembrane-facing. A helical membrane pass occupies residues Tyr-41–Thr-66. The Mitochondrial matrix portion of the chain corresponds to Phe-67–Thr-72. A helical transmembrane segment spans residues Pro-73–Ser-105. Residues Leu-106–Glu-128 are Mitochondrial intermembrane-facing. Residues Val-129 to Met-152 form a helical membrane-spanning segment. Residues Glu-153–Asn-155 lie on the Mitochondrial matrix side of the membrane. The helical transmembrane segment at Arg-156–Glu-183 threads the bilayer. Residues Thr-184–Asp-190 lie on the Mitochondrial intermembrane side of the membrane. The chain crosses the membrane as a helical span at residues Gly-191–Leu-223. Residues Lys-224–His-232 lie on the Mitochondrial matrix side of the membrane. Residues Phe-233 to Ile-256 form a helical membrane-spanning segment. Residues Tyr-257–Ser-261 are Mitochondrial intermembrane-facing.

The protein belongs to the cytochrome c oxidase subunit 3 family. As to quaternary structure, component of the cytochrome c oxidase (complex IV, CIV), a multisubunit enzyme composed of 14 subunits. The complex is composed of a catalytic core of 3 subunits MT-CO1, MT-CO2 and MT-CO3, encoded in the mitochondrial DNA, and 11 supernumerary subunits COX4I, COX5A, COX5B, COX6A, COX6B, COX6C, COX7A, COX7B, COX7C, COX8 and NDUFA4, which are encoded in the nuclear genome. The complex exists as a monomer or a dimer and forms supercomplexes (SCs) in the inner mitochondrial membrane with NADH-ubiquinone oxidoreductase (complex I, CI) and ubiquinol-cytochrome c oxidoreductase (cytochrome b-c1 complex, complex III, CIII), resulting in different assemblies (supercomplex SCI(1)III(2)IV(1) and megacomplex MCI(2)III(2)IV(2)).

It localises to the mitochondrion inner membrane. The catalysed reaction is 4 Fe(II)-[cytochrome c] + O2 + 8 H(+)(in) = 4 Fe(III)-[cytochrome c] + 2 H2O + 4 H(+)(out). Component of the cytochrome c oxidase, the last enzyme in the mitochondrial electron transport chain which drives oxidative phosphorylation. The respiratory chain contains 3 multisubunit complexes succinate dehydrogenase (complex II, CII), ubiquinol-cytochrome c oxidoreductase (cytochrome b-c1 complex, complex III, CIII) and cytochrome c oxidase (complex IV, CIV), that cooperate to transfer electrons derived from NADH and succinate to molecular oxygen, creating an electrochemical gradient over the inner membrane that drives transmembrane transport and the ATP synthase. Cytochrome c oxidase is the component of the respiratory chain that catalyzes the reduction of oxygen to water. Electrons originating from reduced cytochrome c in the intermembrane space (IMS) are transferred via the dinuclear copper A center (CU(A)) of subunit 2 and heme A of subunit 1 to the active site in subunit 1, a binuclear center (BNC) formed by heme A3 and copper B (CU(B)). The BNC reduces molecular oxygen to 2 water molecules using 4 electrons from cytochrome c in the IMS and 4 protons from the mitochondrial matrix. The chain is Cytochrome c oxidase subunit 3 (MT-CO3) from Phoca vitulina (Harbor seal).